The primary structure comprises 134 residues: Retinol-binding protein 2 (134 aa).

K41 and Q109 together coordinate all-trans-retinol.

This sequence belongs to the calycin superfamily. Fatty-acid binding protein (FABP) family. Expressed in prenatal liver, intestine and lung, and in adult intestine.

It localises to the cytoplasm. In terms of biological role, intracellular transport of retinol. The protein is Retinol-binding protein 2 (Rbp2) of Mus musculus (Mouse).